A 125-amino-acid polypeptide reads, in one-letter code: Small ribosomal subunit protein uS13 (125 aa).

The segment at 91–125 is disordered; that stretch reads HRRSLPVRGQNTQTNARTRKGKRKTVAGKKKAARK. The span at 107 to 125 shows a compositional bias: basic residues; that stretch reads RTRKGKRKTVAGKKKAARK.

This sequence belongs to the universal ribosomal protein uS13 family. In terms of assembly, part of the 30S ribosomal subunit. Forms a loose heterodimer with protein S19. Forms two bridges to the 50S subunit in the 70S ribosome.

In terms of biological role, located at the top of the head of the 30S subunit, it contacts several helices of the 16S rRNA. In the 70S ribosome it contacts the 23S rRNA (bridge B1a) and protein L5 of the 50S subunit (bridge B1b), connecting the 2 subunits; these bridges are implicated in subunit movement. Contacts the tRNAs in the A and P-sites. The protein is Small ribosomal subunit protein uS13 of Chlorobium phaeovibrioides (strain DSM 265 / 1930) (Prosthecochloris vibrioformis (strain DSM 265)).